Reading from the N-terminus, the 527-residue chain is Proline--tRNA ligase (527 aa).

This sequence belongs to the class-II aminoacyl-tRNA synthetase family. ProS type 3 subfamily. As to quaternary structure, homodimer.

Its subcellular location is the cytoplasm. It catalyses the reaction tRNA(Pro) + L-proline + ATP = L-prolyl-tRNA(Pro) + AMP + diphosphate. Functionally, catalyzes the attachment of proline to tRNA(Pro) in a two-step reaction: proline is first activated by ATP to form Pro-AMP and then transferred to the acceptor end of tRNA(Pro). This chain is Proline--tRNA ligase, found in Sphingopyxis alaskensis (strain DSM 13593 / LMG 18877 / RB2256) (Sphingomonas alaskensis).